The following is a 357-amino-acid chain: DNA integrity scanning protein DisA (357 aa).

In terms of domain architecture, DAC spans valine 8–isoleucine 146. ATP-binding positions include glycine 75, leucine 93, and methionine 106 to threonine 110.

Belongs to the DisA family. As to quaternary structure, homooctamer. It depends on Mg(2+) as a cofactor.

It carries out the reaction 2 ATP = 3',3'-c-di-AMP + 2 diphosphate. Its function is as follows. Participates in a DNA-damage check-point that is active prior to asymmetric division when DNA is damaged. DisA forms globular foci that rapidly scan along the chromosomes during sporulation, searching for lesions. When a lesion is present, DisA pauses at the lesion site. This triggers a cellular response that culminates in a temporary block in sporulation initiation. Functionally, also has diadenylate cyclase activity, catalyzing the condensation of 2 ATP molecules into cyclic di-AMP (c-di-AMP). c-di-AMP acts as a signaling molecule that couples DNA integrity with progression of sporulation. The rise in c-di-AMP level generated by DisA while scanning the chromosome, operates as a positive signal that advances sporulation; upon encountering a lesion, the DisA focus arrests at the damaged site and halts c-di-AMP synthesis. The polypeptide is DNA integrity scanning protein DisA (Bacillus cereus (strain AH187)).